The chain runs to 1703 residues: Mediator of RNA polymerase II transcription subunit 14 (1703 aa).

Polar residues predominate over residues 755-766 (LSQTADLATSSA). A disordered region spans residues 755-781 (LSQTADLATSSAGPLLRKDQKPRKRSA).

Belongs to the Mediator complex subunit 14 family. As to quaternary structure, component of the Mediator complex. Interacts with CDKE-1, HDA19 and LUG. Interacts with PTAC12/HMR/PAP5 and PIF4. Expressed in roots, stems, developing embryos, young leaf primordia, shoot apical meristems, inflorescence meristems, tapetum in anthers, ovules and floral organ primordia, but not in mature organs.

It localises to the nucleus. Component of the Mediator complex, a coactivator involved in the regulated transcription of nearly all RNA polymerase II-dependent genes. Mediator functions as a bridge to convey information from gene-specific regulatory proteins to the basal RNA polymerase II transcription machinery. The Mediator complex, having a compact conformation in its free form, is recruited to promoters by direct interactions with regulatory proteins and serves for the assembly of a functional pre-initiation complex with RNA polymerase II and the general transcription factors. Binds to G-box (5'-CACGTG-3')-containing regions of target genes promoters (e.g. IAA29 and IAA19). Involved in defining the duration of cell proliferation. Element of a PIF4/HMR/MED14-dependent thermoresponsive process; required for thermomorphogenetic hypocotyl growth in response to daytime warm temperature elicitation by associating to the promoters of thermoresponsive growth-relevant genes (e.g. mainly involved in biosynthesis and signaling of the phytohormone auxin); this also process implies PIF4 and its transcriptional coactivator PTAC12/HMR/PAP5 to promote the expression of target genes. The sequence is that of Mediator of RNA polymerase II transcription subunit 14 from Arabidopsis thaliana (Mouse-ear cress).